The following is a 122-amino-acid chain: Large ribosomal subunit protein uL14c (122 aa).

This sequence belongs to the universal ribosomal protein uL14 family. In terms of assembly, part of the 50S ribosomal subunit.

It is found in the plastid. Its subcellular location is the chloroplast. Binds to 23S rRNA. This Eucalyptus globulus subsp. globulus (Tasmanian blue gum) protein is Large ribosomal subunit protein uL14c.